The sequence spans 296 residues: Bifunctional protein FolD (296 aa).

NADP(+)-binding positions include 166-168 (GRS), S195, and T236.

Belongs to the tetrahydrofolate dehydrogenase/cyclohydrolase family. Homodimer.

The catalysed reaction is (6R)-5,10-methylene-5,6,7,8-tetrahydrofolate + NADP(+) = (6R)-5,10-methenyltetrahydrofolate + NADPH. The enzyme catalyses (6R)-5,10-methenyltetrahydrofolate + H2O = (6R)-10-formyltetrahydrofolate + H(+). The protein operates within one-carbon metabolism; tetrahydrofolate interconversion. Catalyzes the oxidation of 5,10-methylenetetrahydrofolate to 5,10-methenyltetrahydrofolate and then the hydrolysis of 5,10-methenyltetrahydrofolate to 10-formyltetrahydrofolate. The sequence is that of Bifunctional protein FolD from Dehalococcoides mccartyi (strain CBDB1).